A 177-amino-acid chain; its full sequence is Large ribosomal subunit protein uL30 (177 aa).

It belongs to the universal ribosomal protein uL30 family. Part of the 50S ribosomal subunit.

The protein is Large ribosomal subunit protein uL30 of Pyrobaculum islandicum (strain DSM 4184 / JCM 9189 / GEO3).